Reading from the N-terminus, the 2430-residue chain is Spatacsin (2430 aa).

Phosphoserine is present on residues serine 1942 and serine 1943.

In terms of assembly, interacts with AP5Z1, AP5B1, AP5S1 and ZFYVE26. As to expression, ubiquitously expressed at low level. Expressed in embryonic and adult cortical projection neurons.

The protein localises to the cytoplasm. Its subcellular location is the cytosol. It localises to the nucleus. The protein resides in the cell projection. It is found in the axon. The protein localises to the dendrite. Its subcellular location is the synapse. May play a role in neurite plasticity by maintaining cytoskeleton stability and regulating synaptic vesicle transport. This chain is Spatacsin (Spg11), found in Mus musculus (Mouse).